Reading from the N-terminus, the 1739-residue chain is MGQTVTTPLSLTLDHWKDVERTAHNQSVEIRKRRWVTLCSAEWPTFNVGWPRDGTFNPDIITQVKIKVFSSGPHGHPDQVPYIVTWEALAADPPPWVKPFVHPKPPPLLLPPSAPSLPPEPPFPTPPQSSLYPALTSPLNTKPRPQVLPDSGGPLIDLLTEDPPPYRDPGPSSSDGNGGSGEVAPTEGAPDSSPMVSRLRGRREPPVADSTTSQAFPLRQGGNGQFQYWPFSSSDLYNWKNNNPSFSEDPAKLTALIESVLLTHQPTWDDCQQLLGTLLTGEEKQRVLLEARKAVRGEDGRPTQLPNDINDAFPLERPDWDYNTQRGRNHLVHYRQLLLAGLQNAGRSPTNLAKVKGITQGPNESPSAFLERLKEAYRRYTPYDPEDPGQETNVAMSFIWQSAPDIGRKLERLEDLKSKTLGDLVREAEKIFNKRETPEEREERIRRETEEKEERRRAEDEQREKERDRRRHREMSKLLATVISGQRQDRQGGERRRPQLDHDQCAYCKEKGHWARDCPKKPRGPRGPRPQASLLTLDDQGGQGQEPPPEPRITLKVGGQPVTFLVDTGAQHSVLTQNPGPLSDKSAWVQGATGGKRYRWTTDRRVHLATGKVTHSFLHVPDCPYPLLGRHLLTKLKAQIHFEGSGAQVVGPMGQPLQVLTLNIEDEYRLHETSKGPDVPLGSTWLSDFPQAWAETGGMGLAFRQAPLIISLKATSTPVSIKQYPMSQEARLGIKPHIQRLLDQGILVPCQSPWNTPLLPVKKPGTNDYRPVQDLREVNKRVEDIHPTVPNPYNLLSGLPPSHQWYTVLDLKDAFFCLRLHPTSQSLFAFEWKDPEMGISGQLTWTRLPQGFKNSPTLFDEALHRDLADFRIQHPDLILLQYVDDLLLAATSELDCQQGTRALLQTLGDLGYRASAKKAQICQKQVKYLGYLLKEGQRWLTEARKETVMGQPTPKTPRQLREFLGTAGLCRLWIPGFAEMAAPLYPLTKTGTLFKWGPDQQKAYQEIKQALLTAPALGLPDLTKPFELFVDEKQGYAKGVLTQKLGPWRRPVAYLSKKLDPVAAGWPPCLRMVAAIAVLTKDVGKLTMGQPLVILAPHAVEALVKQPPDRWLSNARMTHYQALLLDTDRVQFGPIVALNPATLLPLPEEGLQHDCLDILAEAHGTRPDLTDQPLPDADHTWYTDGSSFLQEGQRRAGAAVTTETEVIWAKALPAGTSAQRAELIALTQALKMAAGKKLNVYTDSRYAFATAHIHGEIYRRRGLLTSEGKEIKNKDEILALLKALFLPKRLSIIHCPGHQKGNHAEARGNRMADQAAREVATRETPETSTLLIENSAPYTREHFHYTVTDIKDLTKLGATYDDAKKCWVYQGKPVMPDQFTFELLDFLHQLTHLSFSKTKALLERSYSPSYMLNRDRTLKDITETCKACAQVNASKSAVKQGTRVRGHRPGTHWEIDFTEVKPGLYGYKYLLVFVDTFSGWVEAFPTKKETAKVVTKKLLEEIFPRFGMPQVLGTDNGPAFVSKVSQTVADLLGVDWKLHCAYRPQSSGQVERMNRTIKETLTKLTLATGSRDWVLLLPLALYRARNTPGPHGLTPYEILYGAPPPLVNFPDPDMAKVTHNPSLQAHLQALYLVQHEVWRPLAAAYQEQLDRPVVPHPFRVGDTVWVRRHQTKNLEPRWKGPYTVLLTTPTALKVDGIAAWIHAAHVKAADTRIEPPAESTWRVQRSQNPLKIRLTRGTS.

The N-myristoyl glycine; by host moiety is linked to residue Gly-2. Positions 111-127 (PPSAPSLPPEPPFPTPP) are enriched in pro residues. The segment at 111–222 (PPSAPSLPPE…SQAFPLRQGG (112 aa)) is disordered. A PTAP/PSAP motif motif is present at residues 112-115 (PSAP). The short motif at 131-135 (LYPAL) is the LYPX(n)L motif element. The PPXY motif motif lies at 163–166 (PPPY). A Phosphoserine; by host modification is found at Ser-193. The segment at 346-394 (GRSPTNLAKVKGITQGPNESPSAFLERLKEAYRRYTPYDPEDPGQETNV) is interaction with host PIAS4. The tract at residues 431–436 (IFNKRE) is interaction with host UBE2I. 2 stretches are compositionally biased toward basic and acidic residues: residues 435–467 (RETP…EKER) and 487–500 (RQDR…RPQL). Disordered stretches follow at residues 435 to 500 (RETP…RPQL) and 514 to 553 (WARD…EPRI). Residues 439 to 479 (EEREERIRRETEEKEERRRAEDEQREKERDRRRHREMSKLL) are a coiled coil. Residues 503-520 (DQCAYCKEKGHWARDCPK) form a CCHC-type zinc finger. In terms of domain architecture, Peptidase A2 spans 562 to 632 (VTFLVDTGAQ…CPYPLLGRHL (71 aa)). Asp-567 functions as the Protease; shared with dimeric partner in the catalytic mechanism. In terms of domain architecture, Reverse transcriptase spans 742-933 (LDQGILVPCQ…KQVKYLGYLL (192 aa)). Mg(2+) is bound by residues Asp-810, Asp-884, Asp-885, Asp-1184, Glu-1222, Asp-1243, and Asp-1313. Residues 1175 to 1321 (PDADHTWYTD…ADQAAREVAT (147 aa)) form the RNase H type-1 domain. An HHCC-type zinc finger spans residues 1388-1428 (HQLTHLSFSKTKALLERSYSPSYMLNRDRTLKDITETCKAC). Residues 1445-1603 (RGHRPGTHWE…TPYEILYGAP (159 aa)) form the Integrase catalytic domain. Asp-1456 and Asp-1515 together coordinate Mg(2+).

This sequence belongs to the retroviral Pol polyprotein family. Homohexamer; further associates as homomultimer. The virus core is composed of a lattice formed from hexagonal rings, each containing six capsid monomers. As to quaternary structure, interacts (via PPXY motif) with host NEDD4. Interacts (via PSAP motif) with host TSG101. Interacts (via LYPX(n)L motif) with host PDCD6IP. In terms of assembly, the reverse transcriptase is a monomer (Potential). Interacts (via RNase domains) with host release factor ETF1; this interaction is essential for translational readthrough of amber codon between viral gag and pol genes, as well as for viral replication. Homodimer. The cofactor is Mg(2+). Ubiquitinated by ITCH. Gag can recruit the ubiquitin ligase Itch in an L domain-independent manner to facilitate virus release via a mechanism that involves Gag ubiquitination. In terms of processing, specific enzymatic cleavages by the viral protease yield mature proteins. The protease is released by autocatalytic cleavage. The polyprotein is cleaved during and after budding, this process is termed maturation. Post-translationally, sumoylated; which is required for virus replication. Phosphorylated on serine residues.

It localises to the virion. It is found in the host cell membrane. The protein localises to the host late endosome membrane. The protein resides in the host endosome. Its subcellular location is the host multivesicular body. It localises to the host cytoplasm. It carries out the reaction DNA(n) + a 2'-deoxyribonucleoside 5'-triphosphate = DNA(n+1) + diphosphate. The catalysed reaction is Endonucleolytic cleavage to 5'-phosphomonoester.. Most efficiently inhibited by Amprenavir, which is able to block Gag-Pol processing in infected cells. Functionally, plays a role in budding and is processed by the viral protease during virion maturation outside the cell. During budding, it recruits, in a PPXY-dependent or independent manner, Nedd4-like ubiquitin ligases that conjugate ubiquitin molecules to Gag-Pol, or to Gag-Pol binding host factors. Interaction with HECT ubiquitin ligases probably links the viral protein to the host ESCRT pathway and facilitates release. In terms of biological role, targets Gag and gag-pol polyproteins to the plasma membrane via a multipartite membrane binding signal, that includes its myristoylated N-terminus. Also mediates nuclear localization of the pre-integration complex. Constituent of the pre-integration complex (PIC) which tethers the latter to mitotic chromosomes. This allows the integration of the viral genome into the host DNA. Its function is as follows. Forms the spherical core of the virion that encapsulates the genomic RNA-nucleocapsid complex. Functionally, involved in the packaging and encapsidation of two copies of the genome. Binds with high affinity to conserved UCUG elements within the packaging signal, located near the 5'-end of the genome. This binding is dependent on genome dimerization. Acts as a nucleic acid chaperone which is involved in rearrangement of nucleic acid secondary structures during gRNA retrotranscription. In terms of biological role, the aspartyl protease mediates proteolytic cleavages of Gag and Gag-Pol polyproteins during or shortly after the release of the virion from the plasma membrane. Cleavages take place as an ordered, step-wise cascade to yield mature proteins. This process is called maturation. Displays maximal activity during the budding process just prior to particle release from the cell (Potential). Cleaves the translation initiation factor eIF4G leading to the inhibition of host cap-dependent translation. RT is a multifunctional enzyme that converts the viral dimeric RNA genome into dsDNA in the cytoplasm, shortly after virus entry into the cell. This enzyme displays a DNA polymerase activity that can copy either DNA or RNA templates, and a ribonuclease H (RNase H) activity that cleaves the RNA strand of RNA-DNA heteroduplexes in a partially processive 3' to 5' endonucleasic mode. Conversion of viral genomic RNA into dsDNA requires many steps. A tRNA binds to the primer-binding site (PBS) situated at the 5' end of the viral RNA. RT uses the 3' end of the tRNA primer to perform a short round of RNA-dependent minus-strand DNA synthesis. The reading proceeds through the U5 region and ends after the repeated (R) region which is present at both ends of viral RNA. The portion of the RNA-DNA heteroduplex is digested by the RNase H, resulting in a ssDNA product attached to the tRNA primer. This ssDNA/tRNA hybridizes with the identical R region situated at the 3' end of viral RNA. This template exchange, known as minus-strand DNA strong stop transfer, can be either intra- or intermolecular. RT uses the 3' end of this newly synthesized short ssDNA to perform the RNA-dependent minus-strand DNA synthesis of the whole template. RNase H digests the RNA template except for a polypurine tract (PPT) situated at the 5' end of the genome. It is not clear if both polymerase and RNase H activities are simultaneous. RNase H probably can proceed both in a polymerase-dependent (RNA cut into small fragments by the same RT performing DNA synthesis) and a polymerase-independent mode (cleavage of remaining RNA fragments by free RTs). Secondly, RT performs DNA-directed plus-strand DNA synthesis using the PPT that has not been removed by RNase H as primers. PPT and tRNA primers are then removed by RNase H. The 3' and 5' ssDNA PBS regions hybridize to form a circular dsDNA intermediate. Strand displacement synthesis by RT to the PBS and PPT ends produces a blunt ended, linear dsDNA copy of the viral genome that includes long terminal repeats (LTRs) at both ends. Its function is as follows. Catalyzes viral DNA integration into the host chromosome, by performing a series of DNA cutting and joining reactions. This enzyme activity takes place after virion entry into a cell and reverse transcription of the RNA genome in dsDNA. The first step in the integration process is 3' processing. This step requires a complex comprising the viral genome, matrix protein and integrase. This complex is called the pre-integration complex (PIC). The integrase protein removes 2 nucleotides from each 3' end of the viral DNA, leaving recessed CA OH's at the 3' ends. In the second step that requires cell division, the PIC enters cell nucleus. In the third step, termed strand transfer, the integrase protein joins the previously processed 3' ends to the 5' ends of strands of target cellular DNA at the site of integration. The last step is viral DNA integration into host chromosome. In Mus musculus (Mouse), this protein is Gag-Pol polyprotein (pol).